The sequence spans 397 residues: CCA-adding enzyme (397 aa).

ATP is bound by residues Gly-26 and Arg-29. The CTP site is built by Gly-26 and Arg-29. 2 residues coordinate Mg(2+): Asp-39 and Asp-41. 5 residues coordinate ATP: Arg-110, Asp-153, Arg-156, Arg-159, and Arg-162. Residues Arg-110, Asp-153, Arg-156, Arg-159, and Arg-162 each contribute to the CTP site.

This sequence belongs to the tRNA nucleotidyltransferase/poly(A) polymerase family. Bacterial CCA-adding enzyme type 3 subfamily. Homodimer. It depends on Mg(2+) as a cofactor.

It catalyses the reaction a tRNA precursor + 2 CTP + ATP = a tRNA with a 3' CCA end + 3 diphosphate. It carries out the reaction a tRNA with a 3' CCA end + 2 CTP + ATP = a tRNA with a 3' CCACCA end + 3 diphosphate. Catalyzes the addition and repair of the essential 3'-terminal CCA sequence in tRNAs without using a nucleic acid template. Adds these three nucleotides in the order of C, C, and A to the tRNA nucleotide-73, using CTP and ATP as substrates and producing inorganic pyrophosphate. tRNA 3'-terminal CCA addition is required both for tRNA processing and repair. Also involved in tRNA surveillance by mediating tandem CCA addition to generate a CCACCA at the 3' terminus of unstable tRNAs. While stable tRNAs receive only 3'-terminal CCA, unstable tRNAs are marked with CCACCA and rapidly degraded. In Bacillus cereus (strain AH187), this protein is CCA-adding enzyme.